The primary structure comprises 159 residues: Phosphopantetheine adenylyltransferase (159 aa).

Substrate is bound at residue T10. ATP-binding positions include 10–11 (TF) and H18. Substrate is bound by residues K42, M74, and R88. Residues 89 to 91 (GLR), E99, and 124 to 130 (WSFISSS) each bind ATP.

This sequence belongs to the bacterial CoaD family. In terms of assembly, homohexamer. Mg(2+) is required as a cofactor.

It is found in the cytoplasm. The enzyme catalyses (R)-4'-phosphopantetheine + ATP + H(+) = 3'-dephospho-CoA + diphosphate. Its pathway is cofactor biosynthesis; coenzyme A biosynthesis; CoA from (R)-pantothenate: step 4/5. Reversibly transfers an adenylyl group from ATP to 4'-phosphopantetheine, yielding dephospho-CoA (dPCoA) and pyrophosphate. In Escherichia coli (strain SMS-3-5 / SECEC), this protein is Phosphopantetheine adenylyltransferase.